The primary structure comprises 205 residues: Methylthioribulose-1-phosphate dehydratase (205 aa).

Residues His-94 and His-96 each coordinate Zn(2+).

This sequence belongs to the aldolase class II family. MtnB subfamily. Requires Zn(2+) as cofactor.

It catalyses the reaction 5-(methylsulfanyl)-D-ribulose 1-phosphate = 5-methylsulfanyl-2,3-dioxopentyl phosphate + H2O. The protein operates within amino-acid biosynthesis; L-methionine biosynthesis via salvage pathway; L-methionine from S-methyl-5-thio-alpha-D-ribose 1-phosphate: step 2/6. Catalyzes the dehydration of methylthioribulose-1-phosphate (MTRu-1-P) into 2,3-diketo-5-methylthiopentyl-1-phosphate (DK-MTP-1-P). This is Methylthioribulose-1-phosphate dehydratase from Pectobacterium atrosepticum (strain SCRI 1043 / ATCC BAA-672) (Erwinia carotovora subsp. atroseptica).